The primary structure comprises 462 residues: Cell wall mannoprotein 1 (462 aa).

The N-terminal stretch at 1–18 (MKFLSSLVVLGLSAQALA) is a signal peptide. Ser-313 lines the hexadecanoate pocket. A disordered region spans residues 346–429 (FAGTGPAPTT…SVPAAPTGGN (84 aa)). Residues 347-366 (AGTGPAPTTSSTPEASTAPA) are compositionally biased toward low complexity. A compositionally biased stretch (polar residues) spans 399–420 (VWPTSTTASPDVQPTITSSGTS).

This sequence belongs to the cell wall mannoprotein 1 family. As to quaternary structure, monomer. Mannoprotein, glycosylated.

It is found in the secreted. It localises to the cell wall. Its function is as follows. Constitutive protein of the cell wall. Binds fatty acids and may thus serve as a fatty acid transporter between P.marneffei and host cells during infection. Abundant antigen target of host humoral immune response. This chain is Cell wall mannoprotein 1, found in Talaromyces marneffei (Penicillium marneffei).